A 369-amino-acid polypeptide reads, in one-letter code: 3 beta-hydroxysteroid dehydrogenase type 7 (369 aa).

Catalysis depends on Y159, which acts as the Proton acceptor. K163 provides a ligand contact to NAD(+). 2 consecutive transmembrane segments (helical) span residues 289–309 (LLPYWLLVLLATLNALLQWLL) and 312–334 (LVLYTPLLNPYTLAMANTTFTVS).

The protein belongs to the 3-beta-HSD family. As to expression, predominantly expressed in liver.

It localises to the endoplasmic reticulum membrane. It catalyses the reaction 7alpha-hydroxycholesterol + NAD(+) = 7alpha-hydroxycholest-4-en-3-one + NADH + H(+). The enzyme catalyses 7alpha,25-dihydroxycholesterol + NAD(+) = 7alpha,25-dihydroxy-4-cholesten-3-one + NADH + H(+). It carries out the reaction (25R)-cholest-5-en-3beta,7alpha,26-triol + NAD(+) = (25R)-7alpha,26-dihydroxycholest-4-en-3-one + NADH + H(+). The catalysed reaction is (24S)-7alpha-dihydroxycholesterol + NAD(+) = (24S)-7alpha,24-dihydroxycholest-4-en-3-one + NADH + H(+). The protein operates within lipid metabolism; steroid biosynthesis. Its function is as follows. The 3-beta-HSD enzymatic system plays a crucial role in the biosynthesis of all classes of hormonal steroids. HSD VII is active against four 7-alpha-hydroxylated sterols. Does not metabolize several different C(19/21) steroids as substrates. Involved in bile acid synthesis. Plays a key role in cell positioning and movement in lymphoid tissues by mediating degradation of 7-alpha,25-dihydroxycholesterol (7-alpha,25-OHC): 7-alpha,25-OHC acts as a ligand for the G protein-coupled receptor GPR183/EBI2, a chemotactic receptor for a number of lymphoid cells. The polypeptide is 3 beta-hydroxysteroid dehydrogenase type 7 (Mus musculus (Mouse)).